The primary structure comprises 289 residues: Acetyl-coenzyme A carboxylase carboxyl transferase subunit beta (289 aa).

Residues 34–289 (MWVKCNKCGE…KLINMHQNSF (256 aa)) form the CoA carboxyltransferase N-terminal domain. Residues C38, C41, C57, and C60 each coordinate Zn(2+). A C4-type zinc finger spans residues 38-60 (CNKCGEILYQNDLEKNYMVCNLC).

It belongs to the AccD/PCCB family. Acetyl-CoA carboxylase is a heterohexamer composed of biotin carboxyl carrier protein (AccB), biotin carboxylase (AccC) and two subunits each of ACCase subunit alpha (AccA) and ACCase subunit beta (AccD). The cofactor is Zn(2+).

The protein resides in the cytoplasm. The catalysed reaction is N(6)-carboxybiotinyl-L-lysyl-[protein] + acetyl-CoA = N(6)-biotinyl-L-lysyl-[protein] + malonyl-CoA. It functions in the pathway lipid metabolism; malonyl-CoA biosynthesis; malonyl-CoA from acetyl-CoA: step 1/1. Functionally, component of the acetyl coenzyme A carboxylase (ACC) complex. Biotin carboxylase (BC) catalyzes the carboxylation of biotin on its carrier protein (BCCP) and then the CO(2) group is transferred by the transcarboxylase to acetyl-CoA to form malonyl-CoA. The chain is Acetyl-coenzyme A carboxylase carboxyl transferase subunit beta from Clostridium botulinum (strain Okra / Type B1).